Reading from the N-terminus, the 528-residue chain is Chaperonin GroEL, chloroplastic (528 aa).

ATP is bound by residues 29–32 (TLGP), 86–90 (DGTTT), G414, and D496.

Belongs to the chaperonin (HSP60) family. As to quaternary structure, forms a cylinder of 14 subunits composed of two heptameric rings stacked back-to-back. Interacts with the co-chaperonin GroES.

The protein localises to the plastid. The protein resides in the chloroplast. The enzyme catalyses ATP + H2O + a folded polypeptide = ADP + phosphate + an unfolded polypeptide.. Its function is as follows. Together with its co-chaperonin GroES, plays an essential role in assisting protein folding. The GroEL-GroES system forms a nano-cage that allows encapsulation of the non-native substrate proteins and provides a physical environment optimized to promote and accelerate protein folding. This Porphyra purpurea (Red seaweed) protein is Chaperonin GroEL, chloroplastic.